A 470-amino-acid polypeptide reads, in one-letter code: Mucin-like protein 3 (470 aa).

The N-terminal stretch at 1-29 is a signal peptide; the sequence is MAQMTSGLYPMFGFFICLLFLPASWEAGA. Topologically, residues 30-401 are extracellular; sequence NTFQELQKTG…EGSNSFPAWA (372 aa). Disordered stretches follow at residues 57–234 and 248–318; these read RALS…HTIP and TKEA…KAPE. Polar residues predominate over residues 75–87; sequence STATQKPKRQCNT. Residue Asn122 is glycosylated (N-linked (GlcNAc...) asparagine). The span at 132-152 shows a compositional bias: basic and acidic residues; it reads ARNERSADDHGSTNSEKRSDG. The span at 169 to 193 shows a compositional bias: polar residues; the sequence is TRTSGTPVSSTETSTKLRTTSQKPE. Basic and acidic residues predominate over residues 194-203; the sequence is TSSHDSDLIR. Positions 204 to 222 are enriched in polar residues; it reads KSTSLPVKSTEVSRTSYRT. A compositionally biased stretch (basic and acidic residues) spans 260–273; sequence KYERETRSASERIS. The segment covering 283 to 295 has biased composition (polar residues); sequence HTPSAGETTTQVS. Asn325 carries N-linked (GlcNAc...) asparagine glycosylation. A helical membrane pass occupies residues 402 to 422; it reads IVVVILMAVIILLIFLGLIFL. Topologically, residues 423–470 are cytoplasmic; it reads VSCASRARHQLTQNSEDAEPEDKGGRNSYPVYLMEQQNLNLNQISSPP.

It localises to the cell membrane. The protein localises to the cytoplasm. May modulate NF-kappaB signaling and play a role in cell growth. The chain is Mucin-like protein 3 from Rattus norvegicus (Rat).